A 427-amino-acid polypeptide reads, in one-letter code: Serine--tRNA ligase (427 aa).

Position 231–233 (231–233 (TAE)) interacts with L-serine. 262–264 (RSE) is a binding site for ATP. Residue glutamate 285 coordinates L-serine. 349-352 (EISS) provides a ligand contact to ATP. Serine 385 contributes to the L-serine binding site.

It belongs to the class-II aminoacyl-tRNA synthetase family. Type-1 seryl-tRNA synthetase subfamily. As to quaternary structure, homodimer. The tRNA molecule binds across the dimer.

The protein resides in the cytoplasm. It carries out the reaction tRNA(Ser) + L-serine + ATP = L-seryl-tRNA(Ser) + AMP + diphosphate + H(+). The catalysed reaction is tRNA(Sec) + L-serine + ATP = L-seryl-tRNA(Sec) + AMP + diphosphate + H(+). It functions in the pathway aminoacyl-tRNA biosynthesis; selenocysteinyl-tRNA(Sec) biosynthesis; L-seryl-tRNA(Sec) from L-serine and tRNA(Sec): step 1/1. Functionally, catalyzes the attachment of serine to tRNA(Ser). Is also able to aminoacylate tRNA(Sec) with serine, to form the misacylated tRNA L-seryl-tRNA(Sec), which will be further converted into selenocysteinyl-tRNA(Sec). This chain is Serine--tRNA ligase, found in Rhizobium rhizogenes (strain K84 / ATCC BAA-868) (Agrobacterium radiobacter).